The following is a 201-amino-acid chain: Holliday junction branch migration complex subunit RuvA (201 aa).

A domain I region spans residues 1–63; the sequence is MIGCLIGEVF…EDAQQLYGFI (63 aa). The tract at residues 64–142 is domain II; it reads DAQEKLIFRT…ALSVQATTGS (79 aa). The segment at 143–152 is flexible linker; it reads TVTSAQIQFS. The interval 152–201 is domain III; sequence SSNSPIAEAEAALQSLGYKPIEAQKAIAAVKADYTEAADLIRAALKSMMK.

This sequence belongs to the RuvA family. Homotetramer. Forms an RuvA(8)-RuvB(12)-Holliday junction (HJ) complex. HJ DNA is sandwiched between 2 RuvA tetramers; dsDNA enters through RuvA and exits via RuvB. An RuvB hexamer assembles on each DNA strand where it exits the tetramer. Each RuvB hexamer is contacted by two RuvA subunits (via domain III) on 2 adjacent RuvB subunits; this complex drives branch migration. In the full resolvosome a probable DNA-RuvA(4)-RuvB(12)-RuvC(2) complex forms which resolves the HJ.

The protein resides in the cytoplasm. In terms of biological role, the RuvA-RuvB-RuvC complex processes Holliday junction (HJ) DNA during genetic recombination and DNA repair, while the RuvA-RuvB complex plays an important role in the rescue of blocked DNA replication forks via replication fork reversal (RFR). RuvA specifically binds to HJ cruciform DNA, conferring on it an open structure. The RuvB hexamer acts as an ATP-dependent pump, pulling dsDNA into and through the RuvAB complex. HJ branch migration allows RuvC to scan DNA until it finds its consensus sequence, where it cleaves and resolves the cruciform DNA. This is Holliday junction branch migration complex subunit RuvA from Acinetobacter baylyi (strain ATCC 33305 / BD413 / ADP1).